The following is a 250-amino-acid chain: uncharacterized protein (250 aa).

Residues 1–17 (MRTLVLLSSVAILSTLA) form the signal peptide. 4 N-linked (GlcNAc...) asparagine glycosylation sites follow: Asn-48, Asn-159, Asn-223, and Asn-239.

Its subcellular location is the secreted. This is an uncharacterized protein from Caenorhabditis elegans.